The following is an 820-amino-acid chain: Trimethylamine-N-oxide reductase (820 aa).

The segment at residues 1–33 (MAITRRSFLKGVATTSAASVIGPSLLASASANA) is a signal peptide (tat-type signal). Mo-bis(molybdopterin guanine dinucleotide) is bound at residue S179.

It belongs to the prokaryotic molybdopterin-containing oxidoreductase family. It depends on Mo-bis(molybdopterin guanine dinucleotide) as a cofactor. In terms of processing, predicted to be exported by the Tat system. The position of the signal peptide cleavage has not been experimentally proven.

It localises to the periplasm. It carries out the reaction trimethylamine + 2 Fe(III)-[cytochrome c] + H2O = trimethylamine N-oxide + 2 Fe(II)-[cytochrome c] + 3 H(+). Its function is as follows. Reduces trimethylamine-N-oxide (TMAO) into trimethylamine; an anaerobic reaction coupled to energy-yielding reactions. This is Trimethylamine-N-oxide reductase (torA) from Vibrio vulnificus (strain YJ016).